The sequence spans 449 residues: Adenylosuccinate synthetase (449 aa).

GTP contacts are provided by residues 12-18 (GDEGKGK) and 40-42 (GHT). The active-site Proton acceptor is the Asp13. Positions 13 and 40 each coordinate Mg(2+). Residues 13-16 (DEGK), 38-41 (NAGH), Thr128, Arg142, Gln223, Thr238, and Arg302 each bind IMP. The active-site Proton donor is His41. 298 to 304 (TTTGRRR) provides a ligand contact to substrate. GTP-binding positions include Arg304, 330 to 332 (KLD), and 412 to 414 (SLG).

It belongs to the adenylosuccinate synthetase family. In terms of assembly, homodimer. It depends on Mg(2+) as a cofactor.

It is found in the cytoplasm. The catalysed reaction is IMP + L-aspartate + GTP = N(6)-(1,2-dicarboxyethyl)-AMP + GDP + phosphate + 2 H(+). It functions in the pathway purine metabolism; AMP biosynthesis via de novo pathway; AMP from IMP: step 1/2. Functionally, plays an important role in the de novo pathway of purine nucleotide biosynthesis. Catalyzes the first committed step in the biosynthesis of AMP from IMP. The chain is Adenylosuccinate synthetase from Gloeothece citriformis (strain PCC 7424) (Cyanothece sp. (strain PCC 7424)).